We begin with the raw amino-acid sequence, 209 residues long: Virulence factors putative positive transcription regulator BvgA (209 aa).

The 116-residue stretch at 4–119 (KVLIIDDHPV…EVINAAKAVM (116 aa)) folds into the Response regulatory domain. Asp54 is modified (4-aspartylphosphate). An HTH luxR-type domain is found at 142–207 (DSTLISVLSN…ELIDLAKRNN (66 aa)). Residues 166–185 (NKDIADSMFLSNKTVSTYKT) constitute a DNA-binding region (H-T-H motif).

As to quaternary structure, homodimer. Phosphorylated by BvgS.

In terms of biological role, member of the two-component regulatory system BvgS/BvgA. Activates the transcription of virulence genes. This chain is Virulence factors putative positive transcription regulator BvgA (bvgA), found in Bordetella bronchiseptica (strain ATCC BAA-588 / NCTC 13252 / RB50) (Alcaligenes bronchisepticus).